Reading from the N-terminus, the 80-residue chain is Acyl carrier protein (80 aa).

Residues 4–79 enclose the Carrier domain; it reads DEIFSKVRSI…DVVNFIKKRK (76 aa). Ser39 carries the O-(pantetheine 4'-phosphoryl)serine modification.

Belongs to the acyl carrier protein (ACP) family. Post-translationally, 4'-phosphopantetheine is transferred from CoA to a specific serine of apo-ACP by AcpS. This modification is essential for activity because fatty acids are bound in thioester linkage to the sulfhydryl of the prosthetic group.

It localises to the cytoplasm. It functions in the pathway lipid metabolism; fatty acid biosynthesis. Functionally, carrier of the growing fatty acid chain in fatty acid biosynthesis. The chain is Acyl carrier protein from Borreliella burgdorferi (strain ATCC 35210 / DSM 4680 / CIP 102532 / B31) (Borrelia burgdorferi).